A 139-amino-acid chain; its full sequence is Large-conductance mechanosensitive channel (139 aa).

The next 2 membrane-spanning stretches (helical) occupy residues 9–29 (AFAVKGNVVDMAVGIIIGAAF) and 79–99 (IQTVIDFVIVAFAIFMGVKAI).

It belongs to the MscL family. In terms of assembly, homopentamer.

It localises to the cell inner membrane. Functionally, channel that opens in response to stretch forces in the membrane lipid bilayer. May participate in the regulation of osmotic pressure changes within the cell. The polypeptide is Large-conductance mechanosensitive channel (Pseudomonas putida (strain ATCC 47054 / DSM 6125 / CFBP 8728 / NCIMB 11950 / KT2440)).